Here is a 1413-residue protein sequence, read N- to C-terminus: DNA-directed RNA polymerase subunit beta' (1413 aa).

Zn(2+)-binding residues include C70, C72, C85, and C88. Mg(2+)-binding residues include D461, D463, and D465. Zn(2+) contacts are provided by C820, C894, C901, and C904.

This sequence belongs to the RNA polymerase beta' chain family. As to quaternary structure, the RNAP catalytic core consists of 2 alpha, 1 beta, 1 beta' and 1 omega subunit. When a sigma factor is associated with the core the holoenzyme is formed, which can initiate transcription. Requires Mg(2+) as cofactor. Zn(2+) serves as cofactor.

The enzyme catalyses RNA(n) + a ribonucleoside 5'-triphosphate = RNA(n+1) + diphosphate. DNA-dependent RNA polymerase catalyzes the transcription of DNA into RNA using the four ribonucleoside triphosphates as substrates. This chain is DNA-directed RNA polymerase subunit beta', found in Cupriavidus metallidurans (strain ATCC 43123 / DSM 2839 / NBRC 102507 / CH34) (Ralstonia metallidurans).